The following is a 314-amino-acid chain: Hydroxyethylthiazole kinase (314 aa).

Residues 1–13 (MSNSASSFADVSS) are compositionally biased toward low complexity. Residues 1-24 (MSNSASSFADVSSGCTAGTPVPAD) form a disordered region. Met-70 provides a ligand contact to substrate. 2 residues coordinate ATP: Arg-145 and Ser-217. Gly-244 provides a ligand contact to substrate.

The protein belongs to the Thz kinase family. Mg(2+) is required as a cofactor.

The enzyme catalyses 5-(2-hydroxyethyl)-4-methylthiazole + ATP = 4-methyl-5-(2-phosphooxyethyl)-thiazole + ADP + H(+). It participates in cofactor biosynthesis; thiamine diphosphate biosynthesis; 4-methyl-5-(2-phosphoethyl)-thiazole from 5-(2-hydroxyethyl)-4-methylthiazole: step 1/1. Catalyzes the phosphorylation of the hydroxyl group of 4-methyl-5-beta-hydroxyethylthiazole (THZ). This is Hydroxyethylthiazole kinase from Bifidobacterium longum subsp. infantis (strain ATCC 15697 / DSM 20088 / JCM 1222 / NCTC 11817 / S12).